Here is a 531-residue protein sequence, read N- to C-terminus: MALAASFNMTNPQPAIEGGISEVEIISQQVDEETKSIAPVQLVNFAYRDLPLAAVDLSTAGSQLLSNLDEDYQREGSNWLKPCCGKRAAVWQVFLLSASLNSFLVACVILVVILLTLELLIDIKLLQFSSAFQFAGVIHWISLVILSVFFSETVLRIVVLGIWDYIENKIEVFDGAVIILSLAPMVASTVANGPRSPWDAISLIIMLRIWRVKRVIDAYVLPVKLEMEMVIQQYEKAKVIQDEQLERLTQICQEQGFEIRQLRAHLAQQDLDLAAEREAALQAPHVLSQPRSRFKVVEAGTWEEETAAESVVEELQPSQEAMVKDDMNSYISQYYNGPSSDSGVPDAAVCMVTTAAIDIHQPDISSDLFSLDMPLKLGGNGTGATSESASRSSVTRAQSDSSQTLGSSTDCSTAREEPSSEPGPSPLPLPPQQQVEEATVQDLLSSLSEDPCPSQRALDPAPLSRPSPAGSAQTSPELEHRVSLFNQKNQEGFTVFQIRPVIHFQPTVPVLEDKFRSLESKEQKLHRVPEA.

Residues 1–102 (MALAASFNMT…VFLLSASLNS (102 aa)) are Cytoplasmic-facing. Residues 103 to 123 (FLVACVILVVILLTLELLIDI) traverse the membrane as a helical segment. Residues 124–129 (KLLQFS) lie on the Extracellular side of the membrane. The helical transmembrane segment at 130-150 (SAFQFAGVIHWISLVILSVFF) threads the bilayer. Residues 151–169 (SETVLRIVVLGIWDYIENK) are Cytoplasmic-facing. The helical transmembrane segment at 170 to 190 (IEVFDGAVIILSLAPMVASTV) threads the bilayer. Residues 191–199 (ANGPRSPWD) lie on the Extracellular side of the membrane. The chain crosses the membrane as a helical span at residues 200 to 220 (AISLIIMLRIWRVKRVIDAYV). Topologically, residues 221-531 (LPVKLEMEMV…EQKLHRVPEA (311 aa)) are cytoplasmic. Positions 231–251 (IQQYEKAKVIQDEQLERLTQI) form a coiled coil. A disordered region spans residues 380–477 (NGTGATSESA…PAGSAQTSPE (98 aa)). A compositionally biased stretch (polar residues) spans 383–412 (GATSESASRSSVTRAQSDSSQTLGSSTDCS). A compositionally biased stretch (pro residues) spans 421-431 (EPGPSPLPLPP).

Homodimer; disulfide-linked.

It is found in the cell membrane. The protein localises to the cell projection. The protein resides in the dendrite. It localises to the perikaryon. Its function is as follows. Voltage-sensor protein present on the post-synaptic side of glutamatergic mossy fibers and granule cells in the cerebellum. Despite the presence of a voltage-sensor segment, does not form a functional ion channel and its precise role remains unclear. Undergoes both rapid and slow structural rearrangements in response to changes in voltage. Contains a zinc-binding site that can regulate the slow conformational transition. This Macaca fascicularis (Crab-eating macaque) protein is Transmembrane protein 266.